The primary structure comprises 168 residues: Sperm acrosome-associated protein 9 (168 aa).

In terms of assembly, microtubule inner protein component of sperm flagellar doublet microtubules. Interacts with CABP1 and CALR. Interacts with INCA1. Interacts with microtubules. Testis-specific. Expressed in round spermatids.

It is found in the cytoplasm. The protein localises to the cytoplasmic vesicle. The protein resides in the secretory vesicle. It localises to the acrosome. Its subcellular location is the cytoskeleton. It is found in the cilium basal body. The protein localises to the flagellum axoneme. The protein resides in the cilium axoneme. It localises to the nucleus. Its function is as follows. Microtubule inner protein (MIP) part of the dynein-decorated doublet microtubules (DMTs) of multiciliated respiratory cells and the distal singlet microtubules of monoflagellated spermatozoa. Forms an extensive interaction network cross-linking the lumen of axonemal doublet microtubules. The chain is Sperm acrosome-associated protein 9 (Spaca9) from Rattus norvegicus (Rat).